Consider the following 445-residue polypeptide: Chromosomal replication initiator protein DnaA (445 aa).

The interval 1–73 (MSTHLTETWE…VNALKLLTSK (73 aa)) is domain I, interacts with DnaA modulators. A domain II region spans residues 73–106 (KKYNIDFIVTTEEKIEKNHNNEKSNIVVNDEMST). The segment at 107-323 (MLNPKYTFDS…GALIRIVAFS (217 aa)) is domain III, AAA+ region. Gly-151, Gly-153, Lys-154, and Thr-155 together coordinate ATP. The segment at 324 to 445 (SLTNKEISVD…KELNKRINQK (122 aa)) is domain IV, binds dsDNA.

The protein belongs to the DnaA family. As to quaternary structure, oligomerizes as a right-handed, spiral filament on DNA at oriC.

Its subcellular location is the cytoplasm. Its function is as follows. Plays an essential role in the initiation and regulation of chromosomal replication. ATP-DnaA binds to the origin of replication (oriC) to initiate formation of the DNA replication initiation complex once per cell cycle. Binds the DnaA box (a 9 base pair repeat at the origin) and separates the double-stranded (ds)DNA. Forms a right-handed helical filament on oriC DNA; dsDNA binds to the exterior of the filament while single-stranded (ss)DNA is stabiized in the filament's interior. The ATP-DnaA-oriC complex binds and stabilizes one strand of the AT-rich DNA unwinding element (DUE), permitting loading of DNA polymerase. After initiation quickly degrades to an ADP-DnaA complex that is not apt for DNA replication. Binds acidic phospholipids. This Clostridium botulinum (strain Okra / Type B1) protein is Chromosomal replication initiator protein DnaA.